Here is a 239-residue protein sequence, read N- to C-terminus: Adapter protein MecA (239 aa).

Residues 118 to 128 (EQRTKEKEAQG) show a composition bias toward basic and acidic residues. Residues 118–137 (EQRTKEKEAQGSKRQKSSAR) are disordered.

Belongs to the MecA family. As to quaternary structure, homodimer.

In terms of biological role, enables the recognition and targeting of unfolded and aggregated proteins to the ClpC protease or to other proteins involved in proteolysis. The polypeptide is Adapter protein MecA (Staphylococcus aureus (strain USA300)).